A 55-amino-acid polypeptide reads, in one-letter code: SFCLEPKRVGRCKGYFPRFYFDSKTGKCTPFIYGGCGGNGNNFETLHQCRAICRA.

Residues Cys-3–Cys-53 form the BPTI/Kunitz inhibitor domain. 3 cysteine pairs are disulfide-bonded: Cys-3-Cys-53, Cys-12-Cys-36, and Cys-28-Cys-49.

Belongs to the venom Kunitz-type family. Sea anemone type 2 potassium channel toxin subfamily.

It is found in the secreted. The protein resides in the nematocyst. In terms of biological role, inhibitor of serine, cysteine, and aspartic proteinases. This chain is PI-stichotoxin-She2b, found in Stichodactyla helianthus (Sun anemone).